The chain runs to 53 residues: Metallocarboxypeptidase inhibitor b (53 aa).

Disulfide bonds link C9/C23, C15/C51, and C27/C38. Zn(2+) is bound at residue A53.

Metallocarboxypeptidase inhibitor. Has an inhibitory effect on bovine CPA1 and porcine CPB1. Does not inhibit D.melanogaster svr (carboxypeptidase D). Shows no activity against serine proteases subtilisin or bovine trypsin, cysteine protease papain, and aspartyl protease porcine pepsin. The protein is Metallocarboxypeptidase inhibitor b of Nerita versicolor (Four-tooth nerite).